The sequence spans 503 residues: Nuclear respiratory factor 1 (503 aa).

Positions 1–78 (MEEHGVTQTE…AHLAAAGPVG (78 aa)) are dimerization. The tract at residues 36–57 (SMLSADEDSPSSPEDTSYDDSD) is disordered. A phosphoserine; by CK2 mark is found at Ser39, Ser44, Ser46, Ser47, and Ser52. The short motif at 88–116 (GKKRKRPHVFESNPSIRKRQQTRLLRKLR) is the Nuclear localization signal element. Residues 109 to 305 (TRLLRKLRAT…SIAHLVPSQT (197 aa)) mediate DNA binding. Lys139 participates in a covalent cross-link: Glycyl lysine isopeptide (Lys-Gly) (interchain with G-Cter in SUMO2). The interval 301 to 476 (VPSQTVVQTF…AQGNGPVQVA (176 aa)) is required for transcriptional activation.

This sequence belongs to the NRF1/Ewg family. Homodimer. Binds DNA as a dimer. Interacts with PPRC1. In terms of processing, phosphorylation enhances DNA binding. In terms of tissue distribution, widely expressed in embryonic, fetal, and adult tissues.

The protein localises to the nucleus. Its function is as follows. Transcription factor that activates the expression of the EIF2S1 (EIF2-alpha) gene. Links the transcriptional modulation of key metabolic genes to cellular growth and development. Implicated in the control of nuclear genes required for respiration, heme biosynthesis, and mitochondrial DNA transcription and replication. In Mus musculus (Mouse), this protein is Nuclear respiratory factor 1 (Nrf1).